The chain runs to 24 residues: Chaperonin GroEL (24 aa).

It belongs to the chaperonin (HSP60) family. Forms a cylinder of 14 subunits composed of two heptameric rings stacked back-to-back. Interacts with the co-chaperonin GroES.

It localises to the cytoplasm. It carries out the reaction ATP + H2O + a folded polypeptide = ADP + phosphate + an unfolded polypeptide.. In terms of biological role, together with its co-chaperonin GroES, plays an essential role in assisting protein folding. The GroEL-GroES system forms a nano-cage that allows encapsulation of the non-native substrate proteins and provides a physical environment optimized to promote and accelerate protein folding. This chain is Chaperonin GroEL, found in Acinetobacter calcoaceticus.